The chain runs to 202 residues: ATP-dependent Clp protease proteolytic subunit (202 aa).

Serine 106 functions as the Nucleophile in the catalytic mechanism. Residue histidine 131 is part of the active site.

This sequence belongs to the peptidase S14 family. As to quaternary structure, fourteen ClpP subunits assemble into 2 heptameric rings which stack back to back to give a disk-like structure with a central cavity, resembling the structure of eukaryotic proteasomes.

Its subcellular location is the cytoplasm. It carries out the reaction Hydrolysis of proteins to small peptides in the presence of ATP and magnesium. alpha-casein is the usual test substrate. In the absence of ATP, only oligopeptides shorter than five residues are hydrolyzed (such as succinyl-Leu-Tyr-|-NHMec, and Leu-Tyr-Leu-|-Tyr-Trp, in which cleavage of the -Tyr-|-Leu- and -Tyr-|-Trp bonds also occurs).. Cleaves peptides in various proteins in a process that requires ATP hydrolysis. Has a chymotrypsin-like activity. Plays a major role in the degradation of misfolded proteins. This chain is ATP-dependent Clp protease proteolytic subunit, found in Shewanella sp. (strain ANA-3).